Reading from the N-terminus, the 70-residue chain is Putative peptide YY-3 (70 aa).

A signal peptide spans 1 to 23 (MVSVCRPWPAVAIALLALLVCLG).

This sequence belongs to the NPY family.

Its subcellular location is the secreted. The sequence is that of Putative peptide YY-3 (PYY3) from Homo sapiens (Human).